Reading from the N-terminus, the 153-residue chain is Proline-rich membrane anchor 1 (153 aa).

The signal sequence occupies residues 1 to 35; it reads MLLRDLVPRHGCCWPSLLLHCALHPLWGLVQVTHA. Over 36–92 the chain is Extracellular; it reads EPQKSCSKVTDSCQHICQCRPPPPLPPPPPPPPPPRLLSAPAPNSTSCPAEDSWWSG. The 15-residue stretch at 56–70 folds into the PRAD domain; the sequence is PPPPLPPPPPPPPPP. Residues 59-71 are compositionally biased toward pro residues; it reads PLPPPPPPPPPPR. The segment at 59–79 is disordered; it reads PLPPPPPPPPPPRLLSAPAPN. A glycan (N-linked (GlcNAc...) asparagine) is linked at asparagine 79. Residues 93-113 traverse the membrane as a helical segment; that stretch reads LVIIVAVVCASLVFLTVLVII. Residues 114–153 lie on the Cytoplasmic side of the membrane; it reads CYKAIKRKPLRKDENGTSVAEYPMSSSQSHKGVDVNAAVV. The interval 129-153 is disordered; sequence GTSVAEYPMSSSQSHKGVDVNAAVV.

In terms of assembly, interacts with ACHE, probably through disulfide bonds. In terms of tissue distribution, predominantly expressed in the central nervous system, including in the brain. Also expressed in muscle, heart and kidney. Isoform 1 may be predominant in the cortex and striatum, while isoform 2 is more abundant in the cerebellum.

The protein resides in the cell membrane. It localises to the cell junction. Its subcellular location is the synapse. Required to anchor acetylcholinesterase (ACHE) to the basal lamina of the neuromuscular junction and to the membrane of neuronal synapses in brain. Also able to organize ACHE into tetramers. The protein is Proline-rich membrane anchor 1 (Prima1) of Mus musculus (Mouse).